The following is a 355-amino-acid chain: Transcription factor TGAL9 (355 aa).

Disordered stretches follow at residues 83–104 (FPSQ…MAAI) and 118–188 (GSSK…DAKT). Over residues 118–134 (GSSKRPPAAAAAGGQPS) the composition is skewed to low complexity. The segment covering 135-144 (RLNNPADQPS) has biased composition (polar residues). 2 stretches are compositionally biased toward basic and acidic residues: residues 148–159 (KDGKAAVVKKEG) and 176–188 (SEHE…DAKT). Residues 185–230 (DAKTLRRLAQNREAARKSRLRKKAYIQNLETSRIRLSQLEQELVQR) enclose the bZIP domain. The segment at 187–207 (KTLRRLAQNREAARKSRLRKK) is basic motif. The interval 213-227 (LETSRIRLSQLEQEL) is leucine-zipper. The 102-residue stretch at 254 to 355 (AAWFDGEYAR…RPSELIKVST (102 aa)) folds into the DOG1 domain.

Belongs to the bZIP family. Interacts with NPR5/NH4, NH5.1 and NH5.2.

The protein localises to the nucleus. Its function is as follows. Transcriptional regulator involved in defense response. The sequence is that of Transcription factor TGAL9 from Oryza sativa subsp. japonica (Rice).